A 421-amino-acid chain; its full sequence is UDP-N-acetylglucosamine 1-carboxyvinyltransferase (421 aa).

A phosphoenolpyruvate-binding site is contributed by 22 to 23; the sequence is KN. Arg-92 provides a ligand contact to UDP-N-acetyl-alpha-D-glucosamine. The active-site Proton donor is the Cys-116. At Cys-116 the chain carries 2-(S-cysteinyl)pyruvic acid O-phosphothioketal. Residues Asp-307 and Val-329 each contribute to the UDP-N-acetyl-alpha-D-glucosamine site.

This sequence belongs to the EPSP synthase family. MurA subfamily.

Its subcellular location is the cytoplasm. It catalyses the reaction phosphoenolpyruvate + UDP-N-acetyl-alpha-D-glucosamine = UDP-N-acetyl-3-O-(1-carboxyvinyl)-alpha-D-glucosamine + phosphate. Its pathway is cell wall biogenesis; peptidoglycan biosynthesis. Cell wall formation. Adds enolpyruvyl to UDP-N-acetylglucosamine. This Kosmotoga olearia (strain ATCC BAA-1733 / DSM 21960 / TBF 19.5.1) protein is UDP-N-acetylglucosamine 1-carboxyvinyltransferase.